A 405-amino-acid chain; its full sequence is Arginine biosynthesis bifunctional protein ArgJ (405 aa).

Threonine 152, lysine 178, threonine 189, glutamate 276, asparagine 400, and threonine 405 together coordinate substrate. Threonine 189 functions as the Nucleophile in the catalytic mechanism.

It belongs to the ArgJ family. In terms of assembly, heterotetramer of two alpha and two beta chains.

Its subcellular location is the cytoplasm. The catalysed reaction is N(2)-acetyl-L-ornithine + L-glutamate = N-acetyl-L-glutamate + L-ornithine. The enzyme catalyses L-glutamate + acetyl-CoA = N-acetyl-L-glutamate + CoA + H(+). The protein operates within amino-acid biosynthesis; L-arginine biosynthesis; L-ornithine and N-acetyl-L-glutamate from L-glutamate and N(2)-acetyl-L-ornithine (cyclic): step 1/1. It participates in amino-acid biosynthesis; L-arginine biosynthesis; N(2)-acetyl-L-ornithine from L-glutamate: step 1/4. In terms of biological role, catalyzes two activities which are involved in the cyclic version of arginine biosynthesis: the synthesis of N-acetylglutamate from glutamate and acetyl-CoA as the acetyl donor, and of ornithine by transacetylation between N(2)-acetylornithine and glutamate. The chain is Arginine biosynthesis bifunctional protein ArgJ from Pseudomonas savastanoi pv. phaseolicola (strain 1448A / Race 6) (Pseudomonas syringae pv. phaseolicola (strain 1448A / Race 6)).